Consider the following 156-residue polypeptide: Small ribosomal subunit protein uS7 (156 aa).

The protein belongs to the universal ribosomal protein uS7 family. Part of the 30S ribosomal subunit. Contacts proteins S9 and S11.

In terms of biological role, one of the primary rRNA binding proteins, it binds directly to 16S rRNA where it nucleates assembly of the head domain of the 30S subunit. Is located at the subunit interface close to the decoding center, probably blocks exit of the E-site tRNA. This Alkaliphilus oremlandii (strain OhILAs) (Clostridium oremlandii (strain OhILAs)) protein is Small ribosomal subunit protein uS7.